The primary structure comprises 90 residues: Repetitive proline-rich cell wall protein 3 (90 aa).

The signal sequence occupies residues 1–24; it reads MASFVSFLVLLLAALILMPQGLAT. The segment covering 46-65 has biased composition (pro residues); it reads KPPVYKPKPPVYKPKPPVYK. Residues 46–90 are disordered; the sequence is KPPVYKPKPPVYKPKPPVYKPPYKKPPYKKPPYGKYPPVEDNTHA.

The protein belongs to the plant proline-rich protein superfamily. ENOD12 family.

It is found in the secreted. The protein resides in the cell wall. The polypeptide is Repetitive proline-rich cell wall protein 3 (PRP3) (Glycine max (Soybean)).